A 74-amino-acid chain; its full sequence is Complement C5a anaphylatoxin (74 aa).

Residues 15-44 (YAMLKKCCYDGAYRNDDETCEERAARIKIG) form an involved in C5AR1 binding region. Intrachain disulfides connect Cys-21/Cys-47, Cys-22/Cys-54, and Cys-34/Cys-55. The region spanning 21–55 (CCYDGAYRNDDETCEERAARIKIGPKCVKAFKDCC) is the Anaphylatoxin-like domain. Residues 72 to 74 (LGR) are required for 90% of C5a activity; although Arg-74 is not essential.

Its subcellular location is the secreted. In terms of biological role, mediator of local inflammatory process released following cleavage by C5 convertase. Acts by binding to its receptor (C5AR1 or C5AR2), activating G protein-coupled receptor signaling and inducing a variety of responses including intracellular calcium release, contraction of smooth muscle, increased vascular permeability, and histamine release from mast cells and basophilic leukocytes. C5a is also a potent chemokine which stimulates the locomotion of polymorphonuclear leukocytes and directs their migration toward sites of inflammation. This is Complement C5a anaphylatoxin (C5) from Sus scrofa (Pig).